Reading from the N-terminus, the 642-residue chain is Threonine--tRNA ligase (642 aa).

In terms of domain architecture, TGS spans 1–61; sequence MPVITLPDGS…EHDAQIAIIT (61 aa). The segment at 243-534 is catalytic; sequence DHRKIGKQLD…LTEEYAGFYP (292 aa). The Zn(2+) site is built by Cys334, His385, and His511.

The protein belongs to the class-II aminoacyl-tRNA synthetase family. Homodimer. Requires Zn(2+) as cofactor.

It localises to the cytoplasm. It carries out the reaction tRNA(Thr) + L-threonine + ATP = L-threonyl-tRNA(Thr) + AMP + diphosphate + H(+). Catalyzes the attachment of threonine to tRNA(Thr) in a two-step reaction: L-threonine is first activated by ATP to form Thr-AMP and then transferred to the acceptor end of tRNA(Thr). Also edits incorrectly charged L-seryl-tRNA(Thr). This Sodalis glossinidius (strain morsitans) protein is Threonine--tRNA ligase.